The primary structure comprises 90 residues: UPF0367 protein Ava_2513 (90 aa).

It belongs to the UPF0367 family.

This Trichormus variabilis (strain ATCC 29413 / PCC 7937) (Anabaena variabilis) protein is UPF0367 protein Ava_2513.